Reading from the N-terminus, the 576-residue chain is TOX high mobility group box family member 3 (576 aa).

Disordered stretches follow at residues 189-258, 422-443, and 519-563; these read NLGG…PQKP, TMVG…QHQM, and LQHM…QIQS. Residues 204–215 show a composition bias toward low complexity; that stretch reads ASKSATPSPSSS. Over residues 223-239 the composition is skewed to basic and acidic residues; the sequence is EANRAIGEKRAAPDSGK. A compositionally biased stretch (basic residues) spans 240-250; it reads KPKTPKKKKKK. A DNA-binding region (HMG box) is located at residues 255–323; that stretch reads PQKPVSAYAL…EYLKALAAYR (69 aa). Residues 428 to 443 show a composition bias toward low complexity; the sequence is PSTQVSPSVQTQQHQM. The segment covering 528-542 has biased composition (polar residues); the sequence is PSPRQHSPVASQITS. Positions 549-563 are enriched in low complexity; that stretch reads SPQPASQQHQSQIQS.

As to quaternary structure, homodimer. Interacts with CREB1; the interaction is not depolarization dependent. Interacts with CREBBP (via C-terminus). Interacts (via HGM box) with CITED1 (via C-terminus); the interaction increases estrogen-response element (ERE)-dependent transcription and protection against cell death. Interacts with CREB1 (phosphorylated form). In terms of tissue distribution, expressed mainly in epithelial cells. Expressed in the central nervous system (CNS), in the ileum and within the brain in the frontal and occipital lobe.

Its subcellular location is the nucleus. Transcriptional coactivator of the p300/CBP-mediated transcription complex. Activates transactivation through cAMP response element (CRE) sites. Protects against cell death by inducing antiapoptotic and repressing pro-apoptotic transcripts. Stimulates transcription from the estrogen-responsive or BCL-2 promoters. Required for depolarization-induced transcription activation of the C-FOS promoter in neurons. Associates with chromatin to the estrogen-responsive C3 promoter region. The protein is TOX high mobility group box family member 3 (TOX3) of Homo sapiens (Human).